The primary structure comprises 544 residues: Phosphoacetylglucosamine mutase (544 aa).

Ser66 (phosphoserine intermediate) is an active-site residue. The Mg(2+) site is built by Ser66, Asp290, Asp292, and Asp294. Substrate contacts are provided by residues 387–389 (EAN), 512–516 (RASGT), and Arg521.

Belongs to the phosphohexose mutase family. Mg(2+) is required as a cofactor.

It catalyses the reaction N-acetyl-alpha-D-glucosamine 1-phosphate = N-acetyl-D-glucosamine 6-phosphate. It functions in the pathway nucleotide-sugar biosynthesis; UDP-N-acetyl-alpha-D-glucosamine biosynthesis; N-acetyl-alpha-D-glucosamine 1-phosphate from alpha-D-glucosamine 6-phosphate (route I): step 2/2. In terms of biological role, catalyzes the conversion of GlcNAc-6-P into GlcNAc-1-P during the synthesis of uridine diphosphate/UDP-GlcNAc, which is a biosynthetic precursor of chitin and also supplies the amino sugars for N-linked oligosaccharides of glycoproteins. In Candida albicans (Yeast), this protein is Phosphoacetylglucosamine mutase.